The sequence spans 493 residues: Guanosine-5'-triphosphate,3'-diphosphate pyrophosphatase (493 aa).

The protein belongs to the GppA/Ppx family. GppA subfamily.

It carries out the reaction guanosine 3'-diphosphate 5'-triphosphate + H2O = guanosine 3',5'-bis(diphosphate) + phosphate + H(+). The protein operates within purine metabolism; ppGpp biosynthesis; ppGpp from GTP: step 2/2. Catalyzes the conversion of pppGpp to ppGpp. Guanosine pentaphosphate (pppGpp) is a cytoplasmic signaling molecule which together with ppGpp controls the 'stringent response', an adaptive process that allows bacteria to respond to amino acid starvation, resulting in the coordinated regulation of numerous cellular activities. In Salmonella choleraesuis (strain SC-B67), this protein is Guanosine-5'-triphosphate,3'-diphosphate pyrophosphatase.